Here is a 724-residue protein sequence, read N- to C-terminus: uncharacterized protein (724 aa).

4 disordered regions span residues 1-23 (MEDR…IPDN), 166-477 (PDGY…PPRD), 496-517 (EAHD…AHGP), and 532-691 (DHPI…PALS). Polar residues-rich tracts occupy residues 227–245 (VSQS…TVNQ) and 270–296 (STTL…TSDA). Residues 304-322 (TRDHDRYGNGRGPDTDRLE) show a composition bias toward basic and acidic residues. Positions 403-413 (PSSSHSETPNM) are enriched in polar residues. 2 stretches are compositionally biased toward basic and acidic residues: residues 550-560 (RNHEFTEDKRL) and 637-657 (LRHD…DLAA). Positions 682–691 (RLAAASPALS) are enriched in low complexity.

This is an uncharacterized protein from Neurospora crassa (strain ATCC 24698 / 74-OR23-1A / CBS 708.71 / DSM 1257 / FGSC 987).